Reading from the N-terminus, the 294-residue chain is Nucleotide-binding protein LCA_0526 (294 aa).

Residue 12–19 (GMSGAGKT) coordinates ATP. 62–65 (DLRS) contacts GTP.

Belongs to the RapZ-like family.

Functionally, displays ATPase and GTPase activities. The polypeptide is Nucleotide-binding protein LCA_0526 (Latilactobacillus sakei subsp. sakei (strain 23K) (Lactobacillus sakei subsp. sakei)).